Here is a 373-residue protein sequence, read N- to C-terminus: PqqA peptide cyclase (373 aa).

The Radical SAM core domain occupies 7–227; sequence ILNPVGLLAE…EVYAGVIVID (221 aa). Cys-21, Cys-25, and Cys-28 together coordinate [4Fe-4S] cluster.

This sequence belongs to the radical SAM superfamily. PqqE family. In terms of assembly, interacts with PqqD. The interaction is necessary for activity of PqqE. The cofactor is [4Fe-4S] cluster.

It catalyses the reaction [PQQ precursor protein] + S-adenosyl-L-methionine = E-Y cross-linked-[PQQ precursor protein] + 5'-deoxyadenosine + L-methionine + H(+). Its pathway is cofactor biosynthesis; pyrroloquinoline quinone biosynthesis. In terms of biological role, catalyzes the cross-linking of a glutamate residue and a tyrosine residue in the PqqA protein as part of the biosynthesis of pyrroloquinoline quinone (PQQ). The protein is PqqA peptide cyclase of Methylocella silvestris (strain DSM 15510 / CIP 108128 / LMG 27833 / NCIMB 13906 / BL2).